An 89-amino-acid polypeptide reads, in one-letter code: Small ribosomal subunit protein uS15 (89 aa).

Belongs to the universal ribosomal protein uS15 family. As to quaternary structure, part of the 30S ribosomal subunit. Forms a bridge to the 50S subunit in the 70S ribosome, contacting the 23S rRNA.

Its function is as follows. One of the primary rRNA binding proteins, it binds directly to 16S rRNA where it helps nucleate assembly of the platform of the 30S subunit by binding and bridging several RNA helices of the 16S rRNA. In terms of biological role, forms an intersubunit bridge (bridge B4) with the 23S rRNA of the 50S subunit in the ribosome. In Herminiimonas arsenicoxydans, this protein is Small ribosomal subunit protein uS15.